A 155-amino-acid polypeptide reads, in one-letter code: Interleukin-2 (155 aa).

Positions 1–20 are cleaved as a signal peptide; it reads MYKIQLLSCIALTLALVANG. Thr-23 carries an O-linked (GalNAc...) threonine glycan. A disulfide bridge connects residues Cys-79 and Cys-127.

This sequence belongs to the IL-2 family.

The protein resides in the secreted. Cytokine produced by activated CD4-positive helper T-cells and to a lesser extend activated CD8-positive T-cells and natural killer (NK) cells that plays pivotal roles in the immune response and tolerance. Binds to a receptor complex composed of either the high-affinity trimeric IL-2R (IL2RA/CD25, IL2RB/CD122 and IL2RG/CD132) or the low-affinity dimeric IL-2R (IL2RB and IL2RG). Interaction with the receptor leads to oligomerization and conformation changes in the IL-2R subunits resulting in downstream signaling starting with phosphorylation of JAK1 and JAK3. In turn, JAK1 and JAK3 phosphorylate the receptor to form a docking site leading to the phosphorylation of several substrates including STAT5. This process leads to activation of several pathways including STAT, phosphoinositide-3-kinase/PI3K and mitogen-activated protein kinase/MAPK pathways. Functions as a T-cell growth factor and can increase NK-cell cytolytic activity as well. Promotes strong proliferation of activated B-cells and subsequently immunoglobulin production. Plays a pivotal role in regulating the adaptive immune system by controlling the survival and proliferation of regulatory T-cells, which are required for the maintenance of immune tolerance. Moreover, participates in the differentiation and homeostasis of effector T-cell subsets, including Th1, Th2, Th17 as well as memory CD8-positive T-cells. This is Interleukin-2 (IL2) from Moschus berezovskii (Chinese forest musk deer).